A 200-amino-acid polypeptide reads, in one-letter code: Peroxiredoxin (200 aa).

A Thioredoxin domain is found at 6-165 (AQIGKPAPEF…TLRLVQAFQH (160 aa)). Cys-52 (cysteine sulfenic acid (-SOH) intermediate) is an active-site residue.

It belongs to the peroxiredoxin family. AhpC/Prx1 subfamily. In terms of assembly, homodimer; disulfide-linked, upon oxidation.

The enzyme catalyses a hydroperoxide + [thioredoxin]-dithiol = an alcohol + [thioredoxin]-disulfide + H2O. Its function is as follows. Thiol-specific peroxidase that catalyzes the reduction of hydrogen peroxide and organic hydroperoxides to water and alcohols, respectively. Plays a role in cell protection against oxidative stress by detoxifying peroxides and as sensor of hydrogen peroxide-mediated signaling events. The sequence is that of Peroxiredoxin from Cynops pyrrhogaster (Japanese fire-bellied newt).